Here is a 316-residue protein sequence, read N- to C-terminus: Porphobilinogen deaminase (316 aa).

Residue Cys-240 is modified to S-(dipyrrolylmethanemethyl)cysteine.

The protein belongs to the HMBS family. As to quaternary structure, monomer. Dipyrromethane is required as a cofactor.

It carries out the reaction 4 porphobilinogen + H2O = hydroxymethylbilane + 4 NH4(+). Its pathway is porphyrin-containing compound metabolism; protoporphyrin-IX biosynthesis; coproporphyrinogen-III from 5-aminolevulinate: step 2/4. Its function is as follows. Tetrapolymerization of the monopyrrole PBG into the hydroxymethylbilane pre-uroporphyrinogen in several discrete steps. The polypeptide is Porphobilinogen deaminase (Alkaliphilus metalliredigens (strain QYMF)).